Reading from the N-terminus, the 832-residue chain is Putative pentatricopeptide repeat-containing protein At5g08310, mitochondrial (832 aa).

The N-terminal 27 residues, 1–27, are a transit peptide targeting the mitochondrion; it reads MAFSRIALLCQRFSRQQQQRQLLHRPL. PPR repeat units follow at residues 105 to 139, 140 to 174, 176 to 212, 213 to 247, 252 to 281, 282 to 316, 317 to 351, 352 to 383, 385 to 415, 438 to 472, 473 to 507, 508 to 542, 543 to 577, 578 to 612, 613 to 647, 648 to 682, 683 to 717, 718 to 752, and 753 to 787; these read DMYA…RCFM, SPGA…GLCV, NAYT…GFHF, DKFT…GWLD, TILV…DIRL, NYKT…GMNA, DIAL…GIPP, DRGI…IDKK, VMLL…LMGN, DSDS…GLIP, GPMM…GVEP, SQFT…GFEP, WIKH…GFLG, HMVA…GHCP, DVIA…GLKP, TVAT…EKNP, DVIT…DCYP, NRIT…EMEP, and DSAV…GRFP.

It belongs to the PPR family. P subfamily.

It localises to the mitochondrion. This Arabidopsis thaliana (Mouse-ear cress) protein is Putative pentatricopeptide repeat-containing protein At5g08310, mitochondrial.